A 1053-amino-acid polypeptide reads, in one-letter code: Zinc finger and BTB domain-containing protein 11 (1053 aa).

Positions 141-156 are enriched in acidic residues; sequence LDLESGEESNESEDDL. A disordered region spans residues 141–173; the sequence is LDLESGEESNESEDDLSNFTSSPTTASKPAKKK. Residues 157-168 are compositionally biased toward low complexity; it reads SNFTSSPTTASK. A BTB domain is found at 214–282; the sequence is CDVTLLIEGE…AYTSVLSFDF (69 aa). Residues 546–566 are disordered; the sequence is LVQRGKKMKQPKRDAKENTEE. The span at 556–566 shows a compositional bias: basic and acidic residues; that stretch reads PKRDAKENTEE. 2 C2H2-type zinc fingers span residues 569–591 and 597–619; these read HKCG…KLKH and YKCP…LIRH. The segment at 619-643 is disordered; the sequence is HTRKDAPSSSSSNSTSNEASGTSSE. Positions 626–642 are enriched in low complexity; the sequence is SSSSSNSTSNEASGTSS. 10 C2H2-type zinc fingers span residues 651 to 673, 679 to 701, 707 to 729, 735 to 757, 766 to 788, 794 to 816, 822 to 846, 858 to 880, 886 to 908, and 914 to 937; these read FICS…MLKH, HACQ…QSLH, FQCE…MSIH, YLCS…FKKH, YHCT…MNKH, FQCQ…VKSH, YRCN…KATH, RVCE…MNNH, FECL…VRTH, and YVCP…TKFH. Residue lysine 1043 forms a Glycyl lysine isopeptide (Lys-Gly) (interchain with G-Cter in SUMO2) linkage. A Phosphoserine modification is found at serine 1050.

Its subcellular location is the nucleus. The protein resides in the nucleolus. Functionally, may be involved in transcriptional regulation. The polypeptide is Zinc finger and BTB domain-containing protein 11 (Homo sapiens (Human)).